The following is a 396-amino-acid chain: Elongation factor Tu (396 aa).

The tr-type G domain occupies 10–206 (KPHCNIGTIG…QVDAYIPQPE (197 aa)). Residues 19–26 (GHVDHGKT) are G1. 19-26 (GHVDHGKT) contributes to the GTP binding site. Residue Thr26 coordinates Mg(2+). Positions 60–64 (GITIS) are G2. Residues 81–84 (DCPG) form a G3 region. Residues 81 to 85 (DCPGH) and 136 to 139 (NKCD) each bind GTP. Residues 136–139 (NKCD) form a G4 region. The tract at residues 174 to 176 (SAL) is G5.

It belongs to the TRAFAC class translation factor GTPase superfamily. Classic translation factor GTPase family. EF-Tu/EF-1A subfamily. Monomer.

Its subcellular location is the cytoplasm. It catalyses the reaction GTP + H2O = GDP + phosphate + H(+). In terms of biological role, GTP hydrolase that promotes the GTP-dependent binding of aminoacyl-tRNA to the A-site of ribosomes during protein biosynthesis. This Rhodopseudomonas palustris (strain ATCC BAA-98 / CGA009) protein is Elongation factor Tu.